The primary structure comprises 492 residues: MKPTTVIGAGFGGLALAIRLQAAGIPVLLLEQRDKPGGRAYVYEDQGFTFDAGPTVITDPSAIEELFALAGKQLKEYVELLPVTPFYRLCWESGKVFNYDNDQTRLEAQIQQFNPRDVEGYRQFLDYSRAVFKEGYLKLGTVPFLSFRDMLRAAPQLAKLQAWRSVYSKVASYIEDEHLRQAFSFHSLLVGGNPFATSSIYTLIHALEREWGVWFPRGGTGALVQGMIKLFQDLGGEVVLNARVSHMETTGNKIEAVHLEDGRRFLTQAVASNADVVHTYRDLLSQHPAAVKQSNKLQTKRMSNSLFVLYFGLNHHHDQLAHHTVCFGPRYRELIDEIFNHDGLAEDFSLYLHAPCVTDSSLAPEGCGSYYVLAPVPHLGTANLDWTVEGPKLRDRIFAYLEQHYMPGLRSQLVTHRMFTPFDFRDQLNAYHGSAFSVEPVLTQSAWFRPHNRDKTITNLYLVGAGTHPGAGIPGVIGSAKATAGLMLEDLI.

5–38 (TVIGAGFGGLALAIRLQAAGIPVLLLEQRDKPGG) contacts FAD.

The protein belongs to the carotenoid/retinoid oxidoreductase family. FAD is required as a cofactor.

It is found in the cell membrane. The catalysed reaction is 15-cis-phytoene + 4 A = all-trans-lycopene + 4 AH2. It functions in the pathway carotenoid biosynthesis; lycopene biosynthesis. With respect to regulation, inhibited by NAD and NADP. Functionally, converts 15-cis-phytoene into all-trans-lycopene via the intermediary of all-trans-phytofluene, all-trans-zeta-carotene and all-trans-neurosporene, by the introduction of four double bonds. This chain is Phytoene desaturase (lycopene-forming) (crtI), found in Pantoea ananas (Erwinia uredovora).